A 541-amino-acid chain; its full sequence is Carboxypeptidase Y homolog A (541 aa).

The N-terminal stretch at 1-17 is a signal peptide; it reads MKVATSALLIGAAAAQQ. Positions 18-125 are excised as a propeptide; sequence QQILKFPDSF…KLEQYSLRAK (108 aa). 5 disulfides stabilise this stretch: Cys-179-Cys-418, Cys-313-Cys-327, Cys-337-Cys-360, Cys-344-Cys-353, and Cys-382-Cys-388. N-linked (GlcNAc...) asparagine glycosylation occurs at Asn-210. The active site involves Ser-266. Residue Asp-457 is part of the active site. An N-linked (GlcNAc...) asparagine glycan is attached at Asn-505. The active site involves His-516.

This sequence belongs to the peptidase S10 family.

The protein localises to the vacuole. It carries out the reaction Release of a C-terminal amino acid with broad specificity.. Its function is as follows. Vacuolar carboxypeptidase involved in degradation of small peptides. Digests preferentially peptides containing an aliphatic or hydrophobic residue in P1' position, as well as methionine, leucine or phenylalanine in P1 position of ester substrate. This is Carboxypeptidase Y homolog A (cpyA) from Pyrenophora tritici-repentis (strain Pt-1C-BFP) (Wheat tan spot fungus).